A 540-amino-acid chain; its full sequence is Chaperonin GroEL (540 aa).

ATP contacts are provided by residues 30–33 (TLGP), 87–91 (DGTTT), Gly415, and Asp496.

Belongs to the chaperonin (HSP60) family. As to quaternary structure, forms a cylinder of 14 subunits composed of two heptameric rings stacked back-to-back. Interacts with the co-chaperonin GroES.

The protein resides in the cytoplasm. The enzyme catalyses ATP + H2O + a folded polypeptide = ADP + phosphate + an unfolded polypeptide.. Together with its co-chaperonin GroES, plays an essential role in assisting protein folding. The GroEL-GroES system forms a nano-cage that allows encapsulation of the non-native substrate proteins and provides a physical environment optimized to promote and accelerate protein folding. In Symbiobacterium thermophilum (strain DSM 24528 / JCM 14929 / IAM 14863 / T), this protein is Chaperonin GroEL.